A 102-amino-acid polypeptide reads, in one-letter code: Aspartyl/glutamyl-tRNA(Asn/Gln) amidotransferase subunit C (102 aa).

The protein belongs to the GatC family. As to quaternary structure, heterotrimer of A, B and C subunits.

The enzyme catalyses L-glutamyl-tRNA(Gln) + L-glutamine + ATP + H2O = L-glutaminyl-tRNA(Gln) + L-glutamate + ADP + phosphate + H(+). The catalysed reaction is L-aspartyl-tRNA(Asn) + L-glutamine + ATP + H2O = L-asparaginyl-tRNA(Asn) + L-glutamate + ADP + phosphate + 2 H(+). Allows the formation of correctly charged Asn-tRNA(Asn) or Gln-tRNA(Gln) through the transamidation of misacylated Asp-tRNA(Asn) or Glu-tRNA(Gln) in organisms which lack either or both of asparaginyl-tRNA or glutaminyl-tRNA synthetases. The reaction takes place in the presence of glutamine and ATP through an activated phospho-Asp-tRNA(Asn) or phospho-Glu-tRNA(Gln). The sequence is that of Aspartyl/glutamyl-tRNA(Asn/Gln) amidotransferase subunit C from Bordetella pertussis (strain Tohama I / ATCC BAA-589 / NCTC 13251).